The primary structure comprises 572 residues: Acyl-coenzyme A synthetase ACSM2, mitochondrial (572 aa).

The N-terminal 46 residues, 1–46 (MHWLWKIPRLCTFWGTEMFHRTFHMNIKKLMPIQWGHQEVPAKFNF), are a transit peptide targeting the mitochondrion. Q139 provides a ligand contact to CoA. Residues 221 to 229 (TSGTSGPPK), 359 to 364 (EIYGQT), D446, and R461 contribute to the ATP site. Residue T364 participates in substrate binding. 469–471 (SGY) contributes to the CoA binding site. Substrate is bound at residue R472. Residues R501, K532, and 540 to 542 (YPR) contribute to the CoA site. Residue K557 coordinates ATP.

Belongs to the ATP-dependent AMP-binding enzyme family. Monomer. The cofactor is Mg(2+). Mn(2+) serves as cofactor. As to expression, detected in kidney, in proximal tubules.

The protein resides in the mitochondrion. The catalysed reaction is a medium-chain fatty acid + ATP + CoA = a medium-chain fatty acyl-CoA + AMP + diphosphate. It catalyses the reaction benzoate + ATP + CoA = benzoyl-CoA + AMP + diphosphate. The enzyme catalyses hexanoate + ATP + CoA = hexanoyl-CoA + AMP + diphosphate. It carries out the reaction butanoate + ATP + CoA = butanoyl-CoA + AMP + diphosphate. The catalysed reaction is octanoate + ATP + CoA = octanoyl-CoA + AMP + diphosphate. It catalyses the reaction decanoate + ATP + CoA = decanoyl-CoA + AMP + diphosphate. In terms of biological role, catalyzes the activation of fatty acids by CoA to produce an acyl-CoA, the first step in fatty acid metabolism. Capable of activating medium-chain fatty acids (e.g. butyric (C4) to decanoic (C10) acids), and certain carboxylate-containing xenobiotics, e.g. benzoate. The sequence is that of Acyl-coenzyme A synthetase ACSM2, mitochondrial (Acsm2) from Rattus norvegicus (Rat).